A 447-amino-acid chain; its full sequence is Tubulin beta chain (447 aa).

Residues Gln11, Glu69, Ser138, Gly142, Thr143, Gly144, Asn204, and Asn226 each contribute to the GTP site. Glu69 is a binding site for Mg(2+).

This sequence belongs to the tubulin family. As to quaternary structure, dimer of alpha and beta chains. A typical microtubule is a hollow water-filled tube with an outer diameter of 25 nm and an inner diameter of 15 nM. Alpha-beta heterodimers associate head-to-tail to form protofilaments running lengthwise along the microtubule wall with the beta-tubulin subunit facing the microtubule plus end conferring a structural polarity. Microtubules usually have 13 protofilaments but different protofilament numbers can be found in some organisms and specialized cells. Mg(2+) is required as a cofactor.

It is found in the cytoplasm. The protein localises to the cytoskeleton. In terms of biological role, tubulin is the major constituent of microtubules, a cylinder consisting of laterally associated linear protofilaments composed of alpha- and beta-tubulin heterodimers. Microtubules grow by the addition of GTP-tubulin dimers to the microtubule end, where a stabilizing cap forms. Below the cap, tubulin dimers are in GDP-bound state, owing to GTPase activity of alpha-tubulin. This Trichophyton rubrum (Athlete's foot fungus) protein is Tubulin beta chain.